The primary structure comprises 312 residues: Carbonic anhydrase 4 (312 aa).

An N-terminal signal peptide occupies residues 1 to 18; it reads MRMLLALLALSAARPSAS. Residues 21 to 285 form the Alpha-carbonic anhydrase domain; the sequence is SHWCYEVQAE…LGQRTVIKSG (265 aa). 2 disulfides stabilise this stretch: C24–C36 and C46–C229. The active-site Proton donor/acceptor is the H88. 3 residues coordinate Zn(2+): H115, H117, and H140. Residue 225–226 coordinates substrate; it reads TT. The GPI-anchor amidated serine moiety is linked to residue S284. The propeptide at 285–312 is removed in mature form; the sequence is GAPGRPLPWALPALLGPMLACLLAGFLR.

This sequence belongs to the alpha-carbonic anhydrase family. As to quaternary structure, interacts with SLC4A4. Zn(2+) serves as cofactor. As to expression, expressed in the endothelium of the choriocapillaris in eyes (at protein level). Not expressed in the retinal epithelium at detectable levels.

Its subcellular location is the cell membrane. The enzyme catalyses hydrogencarbonate + H(+) = CO2 + H2O. Activated by histamine, L-adrenaline, D-phenylalanine, L- and D-histidine. Inhibited by coumarins, saccharin, sulfonamide derivatives such as acetazolamide and Foscarnet (phosphonoformate trisodium salt). In terms of biological role, catalyzes the reversible hydration of carbon dioxide into bicarbonate and protons and thus is essential to maintaining intracellular and extracellular pH. May stimulate the sodium/bicarbonate transporter activity of SLC4A4 that acts in pH homeostasis. It is essential for acid overload removal from the retina and retina epithelium, and acid release in the choriocapillaris in the choroid. This Homo sapiens (Human) protein is Carbonic anhydrase 4.